A 551-amino-acid chain; its full sequence is Arginine--tRNA ligase (551 aa).

The 'HIGH' region signature appears at 124 to 134 (ANPTGPLHIGH).

The protein belongs to the class-I aminoacyl-tRNA synthetase family. As to quaternary structure, monomer.

The protein localises to the cytoplasm. The catalysed reaction is tRNA(Arg) + L-arginine + ATP = L-arginyl-tRNA(Arg) + AMP + diphosphate. This chain is Arginine--tRNA ligase, found in Solidesulfovibrio magneticus (strain ATCC 700980 / DSM 13731 / RS-1) (Desulfovibrio magneticus).